We begin with the raw amino-acid sequence, 281 residues long: N-acetylmuramic acid 6-phosphate etherase (281 aa).

Positions 63–226 constitute an SIS domain; that stretch reads IVPRMKQGGR…TTSVMIQLGR (164 aa). The active-site Proton donor is the Glu-91. Glu-122 is a catalytic residue.

It belongs to the GCKR-like family. MurNAc-6-P etherase subfamily. Homodimer.

It catalyses the reaction N-acetyl-D-muramate 6-phosphate + H2O = N-acetyl-D-glucosamine 6-phosphate + (R)-lactate. It participates in amino-sugar metabolism; N-acetylmuramate degradation. Specifically catalyzes the cleavage of the D-lactyl ether substituent of MurNAc 6-phosphate, producing GlcNAc 6-phosphate and D-lactate. The polypeptide is N-acetylmuramic acid 6-phosphate etherase (Bacteroides fragilis (strain ATCC 25285 / DSM 2151 / CCUG 4856 / JCM 11019 / LMG 10263 / NCTC 9343 / Onslow / VPI 2553 / EN-2)).